Here is a 340-residue protein sequence, read N- to C-terminus: Putative cystathionine beta-lyase (340 aa).

Lys208 carries the post-translational modification N6-(pyridoxal phosphate)lysine.

It belongs to the trans-sulfuration enzymes family. It depends on pyridoxal 5'-phosphate as a cofactor.

It carries out the reaction L,L-cystathionine + H2O = L-homocysteine + pyruvate + NH4(+). The enzyme catalyses an S-substituted L-cysteine + H2O = a thiol + pyruvate + NH4(+). Its pathway is amino-acid biosynthesis; L-methionine biosynthesis via de novo pathway; L-homocysteine from L-cystathionine: step 1/1. The protein is Putative cystathionine beta-lyase (IRC7) of Saccharomyces cerevisiae (strain ATCC 204508 / S288c) (Baker's yeast).